The chain runs to 272 residues: MQLRITSRKKFTVLLCALGLISIVAIYPRQTVNFFYSTAIQIKDYIHFYGYRPVKSFAIRIPASYTIHGIDVSRWQERIDWQRVAKMRDNGIRLQFAFIKATEGEKLVDPYFSRNWQLSRENGLLRGAYHYFSPSVSASVQARLFLQTVDFSQGDFPAVLDVEERGKLSAKELRKRVSQWLKMVEKRTGKKPIIYSGAVFYHTNLAGYFNEYPWWVAHYYQRRPDNDGMAWRFWQHSDRGQVDGINGPVDFNVFNGTVEELQGFVDGIKETP.

Residues Asp71 and Glu163 contribute to the active site.

This sequence belongs to the glycosyl hydrolase 25 family.

This is an uncharacterized protein from Escherichia coli O6:H1 (strain CFT073 / ATCC 700928 / UPEC).